A 346-amino-acid chain; its full sequence is Histidinol-phosphate aminotransferase (346 aa).

Residue K209 is modified to N6-(pyridoxal phosphate)lysine.

It belongs to the class-II pyridoxal-phosphate-dependent aminotransferase family. Histidinol-phosphate aminotransferase subfamily. In terms of assembly, homodimer. Pyridoxal 5'-phosphate is required as a cofactor.

The enzyme catalyses L-histidinol phosphate + 2-oxoglutarate = 3-(imidazol-4-yl)-2-oxopropyl phosphate + L-glutamate. It functions in the pathway amino-acid biosynthesis; L-histidine biosynthesis; L-histidine from 5-phospho-alpha-D-ribose 1-diphosphate: step 7/9. The sequence is that of Histidinol-phosphate aminotransferase from Vibrio parahaemolyticus serotype O3:K6 (strain RIMD 2210633).